Here is a 53-residue protein sequence, read N- to C-terminus: Metallothionein (53 aa).

Belongs to the metallothionein superfamily. Type 14 family.

This protein complexes cadmium, zinc and copper. This Synechococcus sp protein is Metallothionein.